The following is a 216-amino-acid chain: MEYSHVVYALLAVALAIIFVLKGGKPSLKPTKYQALLEGYLRFVRNMLLENVGERGLKYVPLIAAIGLFVFFGNILGMVPGFEAPTANINTNLALALLVFFYYHFEGFRENGLAYLKHFMGPIPLMAPFFFVVEVISHIARPITLSLRLFANMKAGALLLLTLVSLVIKNPFTLVVSPVVLIFVIAIKFLAIFIQTYIFMILSVVYIAGAVAHEEH.

Helical transmembrane passes span Met1–Leu21, Leu62–Phe82, Asn88–Phe108, Phe119–Ile139, Leu149–Lys169, Leu174–Ile194, and Thr196–His216.

It belongs to the ATPase A chain family. In terms of assembly, F-type ATPases have 2 components, CF(1) - the catalytic core - and CF(0) - the membrane proton channel. CF(1) has five subunits: alpha(3), beta(3), gamma(1), delta(1), epsilon(1). CF(0) has three main subunits: a(1), b(2) and c(9-12). The alpha and beta chains form an alternating ring which encloses part of the gamma chain. CF(1) is attached to CF(0) by a central stalk formed by the gamma and epsilon chains, while a peripheral stalk is formed by the delta and b chains.

Its subcellular location is the cell inner membrane. Functionally, key component of the proton channel; it plays a direct role in the translocation of protons across the membrane. The sequence is that of ATP synthase subunit a from Aquifex aeolicus (strain VF5).